Reading from the N-terminus, the 130-residue chain is Small ribosomal subunit protein uS8 (130 aa).

It belongs to the universal ribosomal protein uS8 family. In terms of assembly, component of the small ribosomal subunit (SSU). Mature N.crassa ribosomes consist of a small (40S) and a large (60S) subunit. The 40S small subunit contains 1 molecule of ribosomal RNA (18S rRNA) and at least 32 different proteins. The large 60S subunit contains 3 rRNA molecules (26S, 5.8S and 5S rRNA) and at least 42 different proteins.

Its subcellular location is the cytoplasm. Its function is as follows. Component of the ribosome, a large ribonucleoprotein complex responsible for the synthesis of proteins in the cell. The small ribosomal subunit (SSU) binds messenger RNAs (mRNAs) and translates the encoded message by selecting cognate aminoacyl-transfer RNA (tRNA) molecules. The large subunit (LSU) contains the ribosomal catalytic site termed the peptidyl transferase center (PTC), which catalyzes the formation of peptide bonds, thereby polymerizing the amino acids delivered by tRNAs into a polypeptide chain. The nascent polypeptides leave the ribosome through a tunnel in the LSU and interact with protein factors that function in enzymatic processing, targeting, and the membrane insertion of nascent chains at the exit of the ribosomal tunnel. This chain is Small ribosomal subunit protein uS8 (crp-27), found in Neurospora crassa (strain ATCC 24698 / 74-OR23-1A / CBS 708.71 / DSM 1257 / FGSC 987).